Reading from the N-terminus, the 1479-residue chain is Tyrosine-protein kinase BAZ1B (1479 aa).

Residues 20 to 126 (EPLFTIPHTQ…GEECDFEVGK (107 aa)) form the WAC domain. A disordered region spans residues 146–212 (EAVEKKSDGA…TSLKKGERKW (67 aa)). Composition is skewed to basic and acidic residues over residues 148–165 (VEKK…DKEN) and 173–195 (LQKK…DRAR). Residues Ser-152, Ser-158, and Ser-161 each carry the phosphoserine modification. Positions 207 to 213 (KGERKWA) match the C motif motif. Residue Thr-266 is modified to Phosphothreonine. The interval 302 to 333 (NPSTKRRNTGSPDRKPSKKPKRDSSSLSSPLN) is disordered. Phosphoserine occurs at positions 325, 330, 345, 361, and 374. 2 disordered regions span residues 376–433 (NNNK…KTPK) and 448–472 (TQKM…HKHL). A compositionally biased stretch (basic residues) spans 381-396 (HSFHIPKKGPAAKKPG). The span at 415–425 (GQKSTGNSKSP) shows a compositional bias: polar residues. Residues 454–465 (TPRSSGGVPRSS) show a composition bias toward low complexity. A coiled-coil region spans residues 537–587 (ASMSEEQRKEYLKKKRQELKERLREKAKERREREMLERLEKQKRFEDQELG). A DDT domain is found at 605–669 (NTLFGDVALV…LQTLLQDEIA (65 aa)). Ser-706, Ser-709, and Ser-717 each carry phosphoserine. Residues 774-809 (SAELWKERLAVLKEENDKKRAEKQKRKEMEARNKEN) are a coiled coil. Positions 789–813 (NDKKRAEKQKRKEMEARNKENGKEE) are disordered. Lys-827 is covalently cross-linked (Glycyl lysine isopeptide (Lys-Gly) (interchain with G-Cter in SUMO1); alternate). Residue Lys-827 forms a Glycyl lysine isopeptide (Lys-Gly) (interchain with G-Cter in SUMO2); alternate linkage. Residues Lys-854, Lys-1043, Lys-1089, and Lys-1107 each participate in a glycyl lysine isopeptide (Lys-Gly) (interchain with G-Cter in SUMO2) cross-link. A coiled-coil region spans residues 854-890 (KRKREIQERETKVRLEREAEEERMRKHKAAAEKAFQE). The segment at 1184-1234 (NARCKVCRKKGEDDKLILCDECNKAFHLFCLRPALYEVPDGEWQCPACQPP) adopts a PHD-type zinc-finger fold. The interval 1231-1324 (CQPPTARRNS…SRPKDDPEVD (94 aa)) is disordered. Residues 1254–1277 (SEGDESGEEEEEEEEEEEEEEDYE) show a composition bias toward acidic residues. The stretch at 1257 to 1284 (DESGEEEEEEEEEEEEEEDYEVAGLRLR) forms a coiled coil. Basic residues predominate over residues 1305–1316 (PGKKSHPARRSR). Ser-1315 is modified (phosphoserine). Position 1331 is an N6-acetyllysine (Lys-1331). Positions 1335–1439 (RRQSLELQKC…QCLLALLQKH (105 aa)) constitute a Bromo domain. Ser-1338, Ser-1464, Ser-1466, and Ser-1468 each carry phosphoserine. Positions 1451–1479 (RKFPDRLADDEGDSDSESVGQSRGRRQKK) are disordered.

Belongs to the WAL family. BAZ1B subfamily. In terms of assembly, component of the WICH-1 ISWI chromatin remodeling complex, at least composed of SMARCA1 and BAZ1B/WSTF, which regulates the spacing of histone octamers on the DNA template to facilitate access to DNA. Within the WICH-1 ISWI chromatin remodeling complex interacts with SMARCA1; the interaction is direct. Component of the WICH-5 ISWI chromatin remodeling complex (also called the WICH complex), at least composed of SMARCA5/SNF2H and BAZ1B/WSTF, which regulates the spacing of histone octamers on the DNA template to facilitate access to DNA. Within the WICH-5 ISWI chromatin remodeling complex interacts with SMARCA5/SNF2H; the interaction is direct. Component of the B-WICH chromatin remodeling complex, at least composed of SMARCA5/SNF2H, BAZ1B/WSTF, SF3B1, DEK, MYO1C, ERCC6, MYBBP1A and DDX21. Within the B-WICH chromatin remodeling complex, interacts with SMARCA5/SNF2H, DDX21, DEK, MYBBP1A, SF3B1 and ERCC6. Interacts with MYO1C. Interacts with PCNA; the interaction is direct and is required for BAZ1B/WSTF binding to replication foci during S phase. Interacts with CDT1. Mn(2+) serves as cofactor.

It is found in the nucleus. It catalyses the reaction L-tyrosyl-[protein] + ATP = O-phospho-L-tyrosyl-[protein] + ADP + H(+). Functionally, atypical tyrosine-protein kinase that plays a central role in chromatin remodeling and acts as a transcription regulator. Involved in DNA damage response by phosphorylating 'Tyr-142' of histone H2AX (H2AXY142ph). H2AXY142ph plays a central role in DNA repair and acts as a mark that distinguishes between apoptotic and repair responses to genotoxic stress. Regulatory subunit of the ATP-dependent WICH-1 and WICH-5 ISWI chromatin remodeling complexes, which form ordered nucleosome arrays on chromatin and facilitate access to DNA during DNA-templated processes such as DNA replication, transcription, and repair. Both complexes regulate the spacing of nucleosomes along the chromatin and have the ability to slide mononucleosomes to the center of a DNA template. The WICH-1 ISWI chromatin remodeling complex has a lower ATP hydrolysis rate than the WICH-5 ISWI chromatin remodeling complex. The WICH-5 ISWI chromatin remodeling complex regulates the transcription of various genes, has a role in RNA polymerase I transcription. Within the B-WICH complex has a role in RNA polymerase III transcription. Mediates the recruitment of the WICH-5 ISWI chromatin remodeling complex to replication foci during DNA replication. This is Tyrosine-protein kinase BAZ1B (Baz1b) from Mus musculus (Mouse).